The following is a 381-amino-acid chain: Pre-mRNA-splicing factor cwf28 (381 aa).

Positions 1–21 (MKRKAVLEAFSDSEDEDEKKL) are disordered. Residues S11 and S13 each carry the phosphoserine modification. The stretch at 104–157 (AADNEIVDWKANNSNEKAQNKIATNKESTDILPEEVQLVLNDLNDDVKSANSAN) forms a coiled coil. The disordered stretch occupies residues 262-381 (LNSQNEHTEV…DRSYRSTRTL (120 aa)). Residues 274 to 285 (KSNSIDNLTPSS) show a composition bias toward polar residues. Residues S275 and S277 each carry the phosphoserine modification. Basic and acidic residues-rich tracts occupy residues 287–297 (LFRKRSRDNNL), 306–332 (KHLD…EYHS), and 362–375 (SDRY…DRSY).

It belongs to the SPP2 family. As to quaternary structure, belongs to the 40S cdc5-associated complex (or cwf complex), a spliceosome sub-complex reminiscent of a late-stage spliceosome composed of the U2, U5 and U6 snRNAs and at least brr2, cdc5, cwf2/prp3, cwf3/syf1, cwf4/syf3, cwf5/ecm2, spp42/cwf6, cwf7/spf27, cwf8, cwf9, cwf10, cwf11, cwf12, prp45/cwf13, cwf14, cwf15, cwf16, cwf17, cwf18, cwf19, cwf20, cwf21, cwf22, cwf23, cwf24, cwf25, cwf26, cyp7/cwf27, cwf28, cwf29/ist3, lea1, msl1, prp5/cwf1, prp10, prp12/sap130, prp17, prp22, sap61, sap62, sap114, sap145, slu7, smb1, smd1, smd3, smf1, smg1 and syf2.

It is found in the nucleus. Functionally, involved in spliceosome maturation and the first step of pre-mRNA splicing. The polypeptide is Pre-mRNA-splicing factor cwf28 (cwf28) (Schizosaccharomyces pombe (strain 972 / ATCC 24843) (Fission yeast)).